The primary structure comprises 477 residues: MKVNLPAFERAGVMVVGDVMLDRYWYGPTCRISPEAPVPVVKVNTVEERPGGAANVAMNIASLGANVRLVGLTGIDDAARALSKTLAEVNVKCDFVSVPTHPTITKLRVLSRNQQLIRLDFEEGFEGGDPQPLHERINQALGSIGALVLSDYAKGALTSVQTMISLARQAGVPVLIDPKGTDFERYRGATLLTPNLSEFEAVAGKCKSEDELVERGMKLIADYDLSALLVTRSEQGMTLLQPNKAPLHMPTQAQEVYDVTGAGDTVIGVLAATLAAGNTLEEACYFANAAAGVVVGKLGTSTVSPIELENAVRGRADTGFGVMTEEELRQAVASARKRGEKVVMTNGVFDILHAGHVSYLANARKLGDRLIVAVNSDASTKRLKGDSRPVNPLEQRMIVLGALESVDWVVSFEEDTPQRLIAGILPDLLVKGGDYKPEEIAGSEEVWANGGEVMVLNFEDGCSTTNIIKKIQTESEK.

Residues 1 to 318 (MKVNLPAFER…ENAVRGRADT (318 aa)) form a ribokinase region. 195–198 (NLSE) contributes to the ATP binding site. The active site involves aspartate 264. A cytidylyltransferase region spans residues 344–477 (MTNGVFDILH…IKKIQTESEK (134 aa)).

This sequence in the N-terminal section; belongs to the carbohydrate kinase PfkB family. It in the C-terminal section; belongs to the cytidylyltransferase family. Homodimer.

It carries out the reaction D-glycero-beta-D-manno-heptose 7-phosphate + ATP = D-glycero-beta-D-manno-heptose 1,7-bisphosphate + ADP + H(+). The catalysed reaction is D-glycero-beta-D-manno-heptose 1-phosphate + ATP + H(+) = ADP-D-glycero-beta-D-manno-heptose + diphosphate. The protein operates within nucleotide-sugar biosynthesis; ADP-L-glycero-beta-D-manno-heptose biosynthesis; ADP-L-glycero-beta-D-manno-heptose from D-glycero-beta-D-manno-heptose 7-phosphate: step 1/4. It participates in nucleotide-sugar biosynthesis; ADP-L-glycero-beta-D-manno-heptose biosynthesis; ADP-L-glycero-beta-D-manno-heptose from D-glycero-beta-D-manno-heptose 7-phosphate: step 3/4. In terms of biological role, catalyzes the phosphorylation of D-glycero-D-manno-heptose 7-phosphate at the C-1 position to selectively form D-glycero-beta-D-manno-heptose-1,7-bisphosphate. Functionally, catalyzes the ADP transfer from ATP to D-glycero-beta-D-manno-heptose 1-phosphate, yielding ADP-D-glycero-beta-D-manno-heptose. This is Bifunctional protein HldE from Salmonella dublin (strain CT_02021853).